A 22-amino-acid chain; its full sequence is Superoxide dismutase [Cu-Zn] 2 (22 aa).

Belongs to the Cu-Zn superoxide dismutase family. Homodimer. The cofactor is Cu cation. Zn(2+) serves as cofactor. Dominant isozyme in roots.

Its subcellular location is the cytoplasm. It carries out the reaction 2 superoxide + 2 H(+) = H2O2 + O2. In terms of biological role, destroys radicals which are normally produced within the cells and which are toxic to biological systems. In Picea abies (Norway spruce), this protein is Superoxide dismutase [Cu-Zn] 2.